We begin with the raw amino-acid sequence, 230 residues long: Phosphatidylserine decarboxylase proenzyme (230 aa).

S186 acts as the Schiff-base intermediate with substrate; via pyruvic acid in catalysis. A Pyruvic acid (Ser); by autocatalysis modification is found at S186.

Belongs to the phosphatidylserine decarboxylase family. PSD-A subfamily. Heterodimer of a large membrane-associated beta subunit and a small pyruvoyl-containing alpha subunit. The cofactor is pyruvate. In terms of processing, is synthesized initially as an inactive proenzyme. Formation of the active enzyme involves a self-maturation process in which the active site pyruvoyl group is generated from an internal serine residue via an autocatalytic post-translational modification. Two non-identical subunits are generated from the proenzyme in this reaction, and the pyruvate is formed at the N-terminus of the alpha chain, which is derived from the carboxyl end of the proenzyme. The post-translation cleavage follows an unusual pathway, termed non-hydrolytic serinolysis, in which the side chain hydroxyl group of the serine supplies its oxygen atom to form the C-terminus of the beta chain, while the remainder of the serine residue undergoes an oxidative deamination to produce ammonia and the pyruvoyl prosthetic group on the alpha chain.

Its subcellular location is the cell membrane. The catalysed reaction is a 1,2-diacyl-sn-glycero-3-phospho-L-serine + H(+) = a 1,2-diacyl-sn-glycero-3-phosphoethanolamine + CO2. Its pathway is phospholipid metabolism; phosphatidylethanolamine biosynthesis; phosphatidylethanolamine from CDP-diacylglycerol: step 2/2. Functionally, catalyzes the formation of phosphatidylethanolamine (PtdEtn) from phosphatidylserine (PtdSer). The sequence is that of Phosphatidylserine decarboxylase proenzyme from Wolbachia pipientis wMel.